The following is a 367-amino-acid chain: Mannan endo-1,4-beta-mannosidase (367 aa).

The signal sequence occupies residues 1–17; the sequence is MLLTALAVLFASTGCQA. The substrate site is built by tryptophan 79 and asparagine 176. Glutamate 177 serves as the catalytic Proton donor. An intrachain disulfide couples cysteine 192 to cysteine 259. Substrate contacts are provided by tryptophan 205, tryptophan 240, and tyrosine 279. Glutamate 308 serves as the catalytic Nucleophile. Tryptophan 337 is a substrate binding site.

In terms of assembly, monomer. In terms of processing, the disulfide bond between Cys-192 and Cys-259 has not been observed in X-ray crystallography. This may be a consequence of the X-ray radiation.

It catalyses the reaction Random hydrolysis of (1-&gt;4)-beta-D-mannosidic linkages in mannans, galactomannans and glucomannans.. Hydrolyzes 1,4-beta linked polysaccharide backbones of mannans. Hydrolyzes mannohexaose (M6) preferentially to mannotriose (M4) and less preferentially to mannotetraose (M3), mannopentaose (M5), and mannobiose (M2); hydrolyzes M5 preferentially to M2, and M3, and less preferentially to mannotetraose M4; hydrolyzes M4 preferentially to M3, and less preferentially to mannose (M1), plus very little M2. Does not hydrolyze mannobiose or mannotriose. Does not hydrolyze xlyan, starch, cellulose or galactose. The protein is Mannan endo-1,4-beta-mannosidase of Mytilus edulis (Blue mussel).